The chain runs to 286 residues: 4-diphosphocytidyl-2-C-methyl-D-erythritol kinase (286 aa).

Lys-10 is a catalytic residue. 100–110 is an ATP binding site; that stretch reads PMGSGLGGGSS. Asp-142 is a catalytic residue.

It belongs to the GHMP kinase family. IspE subfamily. In terms of assembly, homodimer.

The enzyme catalyses 4-CDP-2-C-methyl-D-erythritol + ATP = 4-CDP-2-C-methyl-D-erythritol 2-phosphate + ADP + H(+). It participates in isoprenoid biosynthesis; isopentenyl diphosphate biosynthesis via DXP pathway; isopentenyl diphosphate from 1-deoxy-D-xylulose 5-phosphate: step 3/6. Its function is as follows. Catalyzes the phosphorylation of the position 2 hydroxy group of 4-diphosphocytidyl-2C-methyl-D-erythritol. The sequence is that of 4-diphosphocytidyl-2-C-methyl-D-erythritol kinase from Buchnera aphidicola subsp. Acyrthosiphon pisum (strain APS) (Acyrthosiphon pisum symbiotic bacterium).